The sequence spans 289 residues: LysM and putative peptidoglycan-binding domain-containing protein 4 (289 aa).

Residues 1–23 form a disordered region; the sequence is MRLREGPTHSFQPPSSVHSSLGS. Residues 1–208 lie on the Extracellular side of the membrane; it reads MRLREGPTHS…PASGADWGIR (208 aa). A compositionally biased stretch (polar residues) spans 9–23; that stretch reads HSFQPPSSVHSSLGS. Asn30 and Asn59 each carry an N-linked (GlcNAc...) asparagine glycan. The LysM domain occupies 71–115; sequence LERAITEDDNLNKLALQYGCKVSDIKRVNNLITDQDIYALKTIKI. Asn134 and Asn178 each carry an N-linked (GlcNAc...) asparagine glycan. A helical transmembrane segment spans residues 209-229; it reads WWNAVFIMLLVGIVLPVFYIV. Over 230–289 the chain is Cytoplasmic; the sequence is YFKTQGDSEGTFSIEGRTNVSTSLSPHTNTGHSMEQMTQRTSGFSPGLLQDTHKLLNPGG. The tract at residues 252 to 272 is disordered; that stretch reads SLSPHTNTGHSMEQMTQRTSG.

The protein localises to the membrane. The chain is LysM and putative peptidoglycan-binding domain-containing protein 4 (lysmd4) from Xenopus laevis (African clawed frog).